The chain runs to 375 residues: Peptide-N(4)-(N-acetyl-beta-glucosaminyl)asparagine amidase (375 aa).

Zn(2+)-binding residues include cysteine 129, cysteine 132, cysteine 163, and cysteine 166. Cysteine 189 functions as the Nucleophile in the catalytic mechanism. Catalysis depends on residues histidine 219 and aspartate 236. Glutamate 239 provides a ligand contact to substrate. The segment at lysine 345–glutamate 375 is disordered. Residues glutamate 364–glutamate 375 are compositionally biased toward basic and acidic residues.

Belongs to the transglutaminase-like superfamily. PNGase family. The cofactor is Zn(2+).

It localises to the cytoplasm. It carries out the reaction Hydrolysis of an N(4)-(acetyl-beta-D-glucosaminyl)asparagine residue in which the glucosamine residue may be further glycosylated, to yield a (substituted) N-acetyl-beta-D-glucosaminylamine and a peptide containing an aspartate residue.. In terms of biological role, specifically deglycosylates the denatured form of N-linked glycoproteins in the cytoplasm and assists their proteasome-mediated degradation. Cleaves the beta-aspartyl-glucosamine (GlcNAc) of the glycan and the amide side chain of Asn, converting Asn to Asp. Prefers proteins containing high-mannose over those bearing complex type oligosaccharides. Can recognize misfolded proteins in the endoplasmic reticulum that are exported to the cytosol to be destroyed and deglycosylate them, while it has no activity toward native proteins. Deglycosylation is a prerequisite for subsequent proteasome-mediated degradation of some, but not all, misfolded glycoproteins. The chain is Peptide-N(4)-(N-acetyl-beta-glucosaminyl)asparagine amidase (PNG1) from Debaryomyces hansenii (strain ATCC 36239 / CBS 767 / BCRC 21394 / JCM 1990 / NBRC 0083 / IGC 2968) (Yeast).